The following is a 1105-amino-acid chain: DNA polymerase delta catalytic subunit (1105 aa).

The disordered stretch occupies residues 1-46 (MSSGGRGGKRRGAPPPGPSGAAAKRAHPGGTPQPPPPAATAAAPVA). Zn(2+) contacts are provided by C1015, C1018, C1030, and C1033. The CysA-type zinc finger occupies 1015 to 1033 (CLGCKAVISGSNQTLCFHC). Positions 1062, 1065, 1075, and 1080 each coordinate [4Fe-4S] cluster. The CysB motif signature appears at 1062 to 1080 (CQECQGSLHQDVLCTSRDC).

This sequence belongs to the DNA polymerase type-B family. As to quaternary structure, heterodimer with subunits of 125 kDa and 50 kDa. The 125 kDa subunit contains the polymerase active site and most likely the active site for the 3'-5' exonuclease activity. [4Fe-4S] cluster serves as cofactor.

Its subcellular location is the nucleus. It catalyses the reaction DNA(n) + a 2'-deoxyribonucleoside 5'-triphosphate = DNA(n+1) + diphosphate. Functionally, this polymerase possesses two enzymatic activities: DNA synthesis (polymerase) and an exonucleolytic activity that degrades single-stranded DNA in the 3'- to 5'-direction. The chain is DNA polymerase delta catalytic subunit (POLD1) from Oryza sativa subsp. japonica (Rice).